A 410-amino-acid polypeptide reads, in one-letter code: Arginine deiminase (410 aa).

Catalysis depends on Cys-400, which acts as the Amidino-cysteine intermediate.

This sequence belongs to the arginine deiminase family.

It localises to the cytoplasm. It catalyses the reaction L-arginine + H2O = L-citrulline + NH4(+). It participates in amino-acid degradation; L-arginine degradation via ADI pathway; carbamoyl phosphate from L-arginine: step 1/2. In Bacillus thuringiensis subsp. konkukian (strain 97-27), this protein is Arginine deiminase.